The chain runs to 106 residues: uncharacterized protein (106 aa).

At 1 to 6 (MYQTSP) the chain is on the cytoplasmic side. A helical transmembrane segment spans residues 7–27 (LSLFYFQVLVPKFLECFLCFP). At 28-32 (YHKIS) the chain is on the extracellular side. Residues 33 to 53 (LVALLSFFYCQLQTNMIILLS) traverse the membrane as a helical segment. Residues 54-73 (QIKRFLYRQIMIALKIKAKK) lie on the Cytoplasmic side of the membrane. Residues 74–94 (FWFIFKYFNVSCDARLFNELF) form a helical membrane-spanning segment. Residues 95-106 (YIFQTYVSVDSK) are Extracellular-facing.

It is found in the membrane. This is an uncharacterized protein from Saccharomyces cerevisiae (strain ATCC 204508 / S288c) (Baker's yeast).